The primary structure comprises 611 residues: MGLRPLMVGALGVVYGDIGTSPLYTMKTALEWAGGADAETALGMLSLIVWTLLITTSIKYVAVVMRADNDGEGGILALMSLLGIKHGERLGVIAMGLIGAALLYGDGAITPAISVLSALEGLKSPLPQISPYIVTLSAIILVGLFALQAQGTDRIGKLFGPVMIAWFIVIGILGLFGILRHPSVLAALDPRHGLSYLFSHGMTGFLVLGAVFLCATGAEALYADMGHFGARPIRFAWYGLVLPCLILNYAGQTAVVVDAALGQEPNPFFALCPAALQLPLVALATVATIIASQAIISGAFSMTRQAIQLGLCPRLNIAQTSATGYGQIYIGFVNWTLMALTLGLTLGFRSSDNLAAAFGIAVSLTMLLTSILMFLTMREIWKWNLAASLLTAGLFVVVDMSFVSANLMKVLEGGWFPLVVAAVIFFLMMTWHQGRDLLVKKLERDTLPLATFIAQVGAKTRVPGTAVYMTSRLDVVPVPLLHNLKHNKVLHDRIVLLRVVTASTPRVAPDLRIDVEHVGSNFHTMTVRYGFMEQPDVPEALDQCRQRGLIFNMMETSFFVGRVKIVAERRSRFAAFQAHLFEIMHRNAMAATEFFRIPPNRVIELGGQVEI.

12 helical membrane passes run 6–26, 44–64, 90–110, 129–149, 158–178, 193–213, 237–257, 280–300, 328–348, 354–374, 385–405, and 410–430; these read LMVG…LYTM, MLSL…VAVV, LGVI…GAIT, ISPY…ALQA, LFGP…LFGI, GLSY…AVFL, WYGL…AVVV, LVAL…SGAF, IYIG…TLGF, LAAA…ILMF, LAAS…FVSA, and VLEG…LMMT.

Belongs to the HAK/KUP transporter (TC 2.A.72) family.

Its subcellular location is the cell inner membrane. The catalysed reaction is K(+)(in) + H(+)(in) = K(+)(out) + H(+)(out). Its function is as follows. Transport of potassium into the cell. Likely operates as a K(+):H(+) symporter. The protein is Probable potassium transport system protein Kup 1 of Bradyrhizobium sp. (strain BTAi1 / ATCC BAA-1182).